The following is a 79-amino-acid chain: Dolichyl-diphosphooligosaccharide--protein glycosyltransferase subunit TMEM258 (79 aa).

2 helical membrane passes run 17 to 37 and 55 to 75; these read VFPH…AWFF and LISL…LLWV.

Belongs to the OST5 family. As to quaternary structure, component of the oligosaccharyltransferase (OST) complex.

The protein localises to the membrane. Its subcellular location is the endoplasmic reticulum. It is found in the cytoplasm. It participates in protein modification; protein glycosylation. Subunit of the oligosaccharyl transferase (OST) complex that catalyzes the initial transfer of a defined glycan (Glc(3)Man(9)GlcNAc(2) in eukaryotes) from the lipid carrier dolichol-pyrophosphate to an asparagine residue within an Asn-X-Ser/Thr consensus motif in nascent polypeptide chains, the first step in protein N-glycosylation. N-glycosylation occurs cotranslationally and the complex associates with the Sec61 complex at the channel-forming translocon complex that mediates protein translocation across the endoplasmic reticulum (ER). All subunits are required for a maximal enzyme activity. The chain is Dolichyl-diphosphooligosaccharide--protein glycosyltransferase subunit TMEM258 from Gallus gallus (Chicken).